Reading from the N-terminus, the 131-residue chain is U-scoloptoxin-Er5e (131 aa).

A signal peptide spans 1–22 (MKTNCEFPLLCLLIVLVANVEG). The propeptide occupies 23 to 94 (EVEDNELKMV…KRLWRNWERR (72 aa)). 3 RLWRNWE repeats span residues 34-40 (RLWRNWE), 61-67 (RLWRNWE), and 86-92 (RLWRNWE). Position 95 is a pyrrolidone carboxylic acid (Q95). Residues 107-113 (ELWRNWE) form an RLWRNWE 4; approximate repeat. Residues 112–131 (WEDLKRRQVVDLNDEQKTTG) constitute a propeptide that is removed on maturation.

It belongs to the scoloptoxin-08 family. Expressed by the venom gland.

It localises to the secreted. This chain is U-scoloptoxin-Er5e, found in Ethmostigmus rubripes (Giant centipede).